The sequence spans 158 residues: Large ribosomal subunit protein uL30 (158 aa).

It belongs to the universal ribosomal protein uL30 family. Part of the 50S ribosomal subunit.

The sequence is that of Large ribosomal subunit protein uL30 from Saccharolobus islandicus (strain Y.N.15.51 / Yellowstone #2) (Sulfolobus islandicus).